The primary structure comprises 792 residues: Ribonucleoside-diphosphate reductase large subunit (792 aa).

Residues 1–92 (MHVIKRDGRQ…VSNLHKEAKK (92 aa)) form the ATP-cone domain. Residues 5–6 (KR), 11–17 (ERVMFDK), threonine 53, and aspartate 57 contribute to the ATP site. An N6-acetyllysine modification is found at lysine 17. Positions 202 and 217 each coordinate GDP. Cysteine 218 and cysteine 444 form a disulfide bridge. Residues 226-228 (DSI), lysine 243, arginine 256, and 263-264 (AG) contribute to the dTTP site. Lysine 376 is subject to N6-acetyllysine. Serine 427 (proton acceptor) is an active-site residue. The Cysteine radical intermediate role is filled by cysteine 429. GDP contacts are provided by residues glutamate 431 and 604–607 (TAST). Glutamate 431 acts as the Proton acceptor in catalysis. Threonine 751 bears the Phosphothreonine mark.

It belongs to the ribonucleoside diphosphate reductase large chain family. As to quaternary structure, heterodimer of a large and a small subunit. Interacts with RRM2B. Interacts with AHCYL1 which inhibits its activity.

Its subcellular location is the cytoplasm. It catalyses the reaction a 2'-deoxyribonucleoside 5'-diphosphate + [thioredoxin]-disulfide + H2O = a ribonucleoside 5'-diphosphate + [thioredoxin]-dithiol. Its activity is regulated as follows. Under complex allosteric control mediated by deoxynucleoside triphosphates and ATP binding to separate specificity and activation sites on the M1 subunit. The type of nucleotide bound at the specificity site determines substrate preference. It seems probable that ATP makes the enzyme reduce CDP and UDP, dGTP favors ADP reduction and dTTP favors GDP reduction. Stimulated by ATP and inhibited by dATP binding to the activity site, the dATP inhibition is mediated by AHCYL1 which stabilizes dATP in the site. Provides the precursors necessary for DNA synthesis. Catalyzes the biosynthesis of deoxyribonucleotides from the corresponding ribonucleotides. In Pongo abelii (Sumatran orangutan), this protein is Ribonucleoside-diphosphate reductase large subunit (RRM1).